A 105-amino-acid chain; its full sequence is uncharacterized protein (105 aa).

3 consecutive transmembrane segments (helical) span residues 14–34 (ILLMLRLAVTAVAVFLAIVAW), 41–61 (ETVCFIAGVLCMYLAQLFAFL), and 80–100 (VGFTLELLPLACFIASLIFTI).

The protein localises to the cell membrane. This is an uncharacterized protein from Treponema pallidum (strain Nichols).